A 1015-amino-acid polypeptide reads, in one-letter code: Putative ankyrin repeat protein R96 (1015 aa).

Basic residues predominate over residues 1-14 (MSTVKKSSKKKSSK). The segment at 1–37 (MSTVKKSSKKKSSKKSSSGNESSKKSSPKIVPKHTAK) is disordered. ANK repeat units lie at residues 136–165 (NGHK…NIDF), 168–201 (APSN…AVNI), 202–231 (DGRS…DVEV), 340–370 (LGHN…DFQA), 374–403 (NITN…KIVS), 456–485 (SGYR…TIFA), 498–527 (NNND…QFQL), and 535–564 (TVPT…ITDC).

This Acanthamoeba polyphaga mimivirus (APMV) protein is Putative ankyrin repeat protein R96.